The sequence spans 398 residues: Alpha-2,8-sialyltransferase 8F (398 aa).

Residues 1 to 3 are Cytoplasmic-facing; it reads MRP. Residues 4 to 24 form a helical; Signal-anchor for type II membrane protein membrane-spanning segment; sequence GGALLALLASLLLLLLLRLLW. Residues 25–398 lie on the Lumenal side of the membrane; the sequence is CPADAPGRAR…KLQFSKCEVA (374 aa). Residues N66, N93, N151, and N196 are each glycosylated (N-linked (GlcNAc...) asparagine). 2 cysteine pairs are disulfide-bonded: C186–C335 and C200–C395. Substrate-binding positions include N214, 236–238, and 322–324; these read NPS and STG. H370 (proton donor/acceptor) is an active-site residue.

It belongs to the glycosyltransferase 29 family.

The protein resides in the golgi apparatus membrane. The catalysed reaction is a ganglioside GM3 + CMP-N-acetyl-beta-neuraminate = a ganglioside GD3 + CMP + H(+). It carries out the reaction a ganglioside GM3 (d18:1(4E)) + CMP-N-acetyl-beta-neuraminate = a ganglioside GD3 (d18:1(4E)) + CMP + H(+). It catalyses the reaction a ganglioside GD1a (d18:1(4E)) + CMP-N-acetyl-beta-neuraminate = a ganglioside GT1a (d18:1(4E)) + CMP + H(+). The enzyme catalyses a ganglioside GD1a + CMP-N-acetyl-beta-neuraminate = a ganglioside GT1a + CMP + H(+). The catalysed reaction is a ganglioside GM1b (d18:1(4E)) + CMP-N-acetyl-beta-neuraminate = a ganglioside GD1c (d18:1(4E)) + CMP + H(+). It carries out the reaction a ganglioside GM1b + CMP-N-acetyl-beta-neuraminate = a ganglioside GD1c + CMP + H(+). It catalyses the reaction a ganglioside GM4 (d18:1(4E)) + CMP-N-acetyl-beta-neuraminate = an N-acetyl-alpha-neuraminosyl-(2-&gt;8)-N-acetyl-alpha-neuraminosyl-(2-&gt;3)-beta-D-galactosyl-(1&lt;-&gt;1')-N-acylsphing-4-enine + CMP + H(+). The enzyme catalyses N-acetyl-alpha-neuraminosyl-(2-&gt;3)-beta-D-galactosyl-(1&lt;-&gt;1')-ceramide + CMP-N-acetyl-beta-neuraminate = N-acetyl-alpha-neuraminosyl-(2-&gt;8)-N-acetyl-alpha-neuraminosyl-(2-&gt;3)-beta-D-galactosyl-(1&lt;-&gt;1')-ceramide + CMP + H(+). The catalysed reaction is a ganglioside GT1b (d18:1(4E)) + CMP-N-acetyl-beta-neuraminate = a ganglioside GQ1b (d18:1(4E)) + CMP + H(+). It carries out the reaction a ganglioside GT1b + CMP-N-acetyl-beta-neuraminate = a ganglioside GQ1b + CMP + H(+). Its pathway is protein modification; protein glycosylation. Alpha-2,8-sialyltransferase that prefers O-glycans to N-glycans or glycolipids as acceptor substrates. The minimal acceptor substrate is the NeuAc-alpha-2,3(6)-Gal sequence at the non-reducing end of their carbohydrate groups. This chain is Alpha-2,8-sialyltransferase 8F (ST8SIA6), found in Pan troglodytes (Chimpanzee).